Here is a 240-residue protein sequence, read N- to C-terminus: Splicing factor U2AF 35 kDa subunit (240 aa).

An N-acetylalanine modification is found at A2. The C3H1-type 1 zinc finger occupies 12 to 40 (EKDKVNCSFYFKIGACRHGDRCSRLHNKP). K39 is subject to N6-methyllysine. 2 positions are modified to phosphoserine: S61 and S145. One can recognise an RRM domain in the interval 65-147 (LRCAVSDVEM…QPIHAELSPV (83 aa)). A C3H1-type 2 zinc finger spans residues 149–176 (DFREACCRQYEMGECTRGGFCNFMHLKP). R165 bears the Omega-N-methylarginine mark. A disordered region spans residues 183–240 (RELYGRRRKKHRSRSRSRERRSRSRDRGRGGGGGGGGGGGGRERDRRRSRDRERSGRF). The segment covering 188–208 (RRRKKHRSRSRSRERRSRSRD) has biased composition (basic residues). Positions 212–222 (GGGGGGGGGGG) are enriched in gly residues. Residues 223–240 (GRERDRRRSRDRERSGRF) are compositionally biased toward basic and acidic residues.

This sequence belongs to the splicing factor SR family. Identified in the spliceosome C complex. Heterodimer with U2AF2. Interacts (via RS domain) with PHF5A (via N-terminus). Interacts with ZRANB2. Interacts with SDE2. Interacts with SF3B1.

The protein resides in the nucleus. Its subcellular location is the nucleus speckle. In terms of biological role, plays a critical role in both constitutive and enhancer-dependent splicing by mediating protein-protein interactions and protein-RNA interactions required for accurate 3'-splice site selection. Recruits U2 snRNP to the branch point. Directly mediates interactions between U2AF2 and proteins bound to the enhancers and thus may function as a bridge between U2AF2 and the enhancer complex to recruit it to the adjacent intron. The sequence is that of Splicing factor U2AF 35 kDa subunit (U2AF1) from Homo sapiens (Human).